We begin with the raw amino-acid sequence, 524 residues long: Decreased expression in renal and prostate cancer protein (524 aa).

Basic and acidic residues predominate over residues 1 to 12 (MKEPRIFPRERP). Disordered regions lie at residues 1–43 (MKEP…TGHP) and 64–252 (PFPR…LDAR). Positions 129–148 (LNPRTGALPGPGPLSNPRLG) are enriched in low complexity. Over residues 163–181 (GLLGAGPDPRGGGPMGPGS) the composition is skewed to gly residues. Serine 302 is subject to Phosphoserine. Over residues 312 to 323 (PMGPNSGPSSRG) the composition is skewed to low complexity. Positions 312 to 332 (PMGPNSGPSSRGIGLPGPNPS) are disordered. An Asymmetric dimethylarginine modification is found at arginine 364. An Omega-N-methylarginine modification is found at arginine 387. The residue at position 423 (serine 423) is a Phosphoserine.

Belongs to the DERPC family. Ubiquitously expressed, with abundant expression in kidney, skeletal muscle, testis, liver, ovary, and heart and moderate expression in prostate. Expression is significantly reduced in renal and prostate tumors. No differential expression in breast cancer cells, between lobular carcinoma and normal lobules.

Its subcellular location is the nucleus. Functionally, potential tumor suppressor. Inhibits prostate tumor cell growth, when overexpressed. The chain is Decreased expression in renal and prostate cancer protein from Homo sapiens (Human).